Reading from the N-terminus, the 358-residue chain is Plastoglobulin-1, chloroplastic (358 aa).

Residues 1–47 (MALLSSTLRAPLVFSKNPKPVSLSSLHSRIYLSPRSPRFPSLRFISA) constitute a chloroplast transit peptide. Residues 48-114 (AGDTGDAEKP…NDAGNGTPTF (67 aa)) form a disordered region.

It belongs to the PAP/fibrillin family.

Its subcellular location is the plastid. The protein localises to the chloroplast. Functionally, may form together with other plastoglobulins a coat on the surface of the lipoprotein particle. The coat may contain receptors for attachment to the thylakoid membrane as well as regulatory proteins that may function in the transfer of lipids to and from the thylakoid membranes. The chain is Plastoglobulin-1, chloroplastic (PG1) from Pisum sativum (Garden pea).